We begin with the raw amino-acid sequence, 288 residues long: Inositol monophosphatase 2 (288 aa).

The Mg(2+) site is built by E81, D101, I103, and D104. E81 is a binding site for substrate. Residues 103-106 (IDGT), 205-207 (GSS), Q224, and D231 each bind substrate. D231 provides a ligand contact to Mg(2+).

Belongs to the inositol monophosphatase superfamily. Homodimer. Requires Mg(2+) as cofactor.

The protein localises to the cytoplasm. The catalysed reaction is a myo-inositol phosphate + H2O = myo-inositol + phosphate. The enzyme catalyses 1D-myo-inositol 1-phosphate + H2O = myo-inositol + phosphate. It carries out the reaction 1D-myo-inositol 2-phosphate + H2O = myo-inositol + phosphate. It catalyses the reaction 1D-myo-inositol 3-phosphate + H2O = myo-inositol + phosphate. The catalysed reaction is 1D-myo-inositol 4-phosphate + H2O = myo-inositol + phosphate. The enzyme catalyses 1D-myo-inositol 5-phosphate + H2O = myo-inositol + phosphate. It carries out the reaction 1D-myo-inositol 6-phosphate + H2O = myo-inositol + phosphate. It catalyses the reaction alpha-D-glucose 1-phosphate + H2O = D-glucose + phosphate. The catalysed reaction is glycerol 2-phosphate + H2O = glycerol + phosphate. The enzyme catalyses adenosine 2'-phosphate + H2O = adenosine + phosphate. Its pathway is polyol metabolism; myo-inositol biosynthesis; myo-inositol from D-glucose 6-phosphate: step 2/2. With respect to regulation, inhibited by high Li(+) and restricted Mg(2+) concentrations. Its function is as follows. Phosphatase that can use myo-inositol monophosphates, myo-inositol 1,4-diphosphate, scyllo-inositol-1,4-diphosphate, glucose-1-phosphate, beta-glycerophosphate and 2'-AMP as substrates in vitro. It is likely that IMPA2 has an as yet unidentified in vivo substrate(s). Has been implicated as the pharmacological target for lithium (Li(+)) action in brain. The protein is Inositol monophosphatase 2 of Homo sapiens (Human).